Consider the following 285-residue polypeptide: NAD kinase (285 aa).

Asp-68 serves as the catalytic Proton acceptor. NAD(+) contacts are provided by residues 68-69 (DG), 142-143 (ND), Arg-153, Arg-170, Asp-172, and Gln-242.

The protein belongs to the NAD kinase family. It depends on a divalent metal cation as a cofactor.

The protein resides in the cytoplasm. It catalyses the reaction NAD(+) + ATP = ADP + NADP(+) + H(+). Involved in the regulation of the intracellular balance of NAD and NADP, and is a key enzyme in the biosynthesis of NADP. Catalyzes specifically the phosphorylation on 2'-hydroxyl of the adenosine moiety of NAD to yield NADP. The sequence is that of NAD kinase from Acidobacterium capsulatum (strain ATCC 51196 / DSM 11244 / BCRC 80197 / JCM 7670 / NBRC 15755 / NCIMB 13165 / 161).